The following is a 1342-amino-acid chain: Restriction of telomere capping protein 1 (1342 aa).

The interval 1-39 (MSLSPHVENASIPKGSTPIPKNRNVSSIGKGEFLGSSSS) is disordered. WD repeat units lie at residues 207-248 (NKFS…SIDN), 256-296 (EHTR…SKSS), 305-342 (TASD…YKFA), 367-406 (AHTG…NAAE), 439-486 (NTGY…IPKH), and 489-527 (LSET…TVLE). Disordered regions lie at residues 559–593 (PELQ…IGGI), 600–619 (TGLT…GPTF), 630–651 (ASSF…ENRE), 736–766 (KNAT…DDDD), and 788–831 (LMNE…DRSR). Low complexity predominate over residues 630–644 (ASSFNSSSASLTSLT). The segment covering 753 to 766 (DDGDDDDDDDDDDD) has biased composition (acidic residues). Residues 815-824 (SSISSISASR) are compositionally biased toward low complexity. A WD 7 repeat occupies 844-884 (KIQTLVDLISIATHNASVYLSIDDLTNFKIWILIRDSLLWD). Disordered regions lie at residues 942–962 (AFRA…SKLK) and 1014–1043 (DEHE…AKSI). 2 stretches are compositionally biased toward basic and acidic residues: residues 952 to 962 (DAEKKPVSKLK) and 1016 to 1028 (HEHQ…HDSP). Residues S1037, S1081, S1088, S1090, S1124, and S1134 each carry the phosphoserine modification. 2 WD repeats span residues 1130 to 1170 (SRPD…KQLY) and 1217 to 1256 (LFGI…LITN). The segment at 1294 to 1336 (CVLCERPLKKLTMVILPCGHEGHFQCIQEWFLDENEQECPGGC) adopts an RING-type; degenerate zinc-finger fold.

This sequence belongs to the WD repeat RTC1 family.

The protein resides in the vacuole. May be involved in a process influencing telomere capping. In Saccharomyces cerevisiae (strain Lalvin EC1118 / Prise de mousse) (Baker's yeast), this protein is Restriction of telomere capping protein 1 (RTC1).